A 935-amino-acid polypeptide reads, in one-letter code: LPS-assembly protein LptD (935 aa).

The signal sequence occupies residues 1 to 33 (MALKSPAFRRKFPLLVTGGLLALQPLATSYVVA). The interval 52–85 (KTPVNNLPPRPVHEGAAVSSGTEAAGEAETADRP) is disordered. The segment covering 65-79 (EGAAVSSGTEAAGEA) has biased composition (low complexity).

It belongs to the LptD family. In terms of assembly, component of the lipopolysaccharide transport and assembly complex. Interacts with LptE and LptA.

The protein localises to the cell outer membrane. Together with LptE, is involved in the assembly of lipopolysaccharide (LPS) at the surface of the outer membrane. This chain is LPS-assembly protein LptD, found in Pseudomonas putida (strain ATCC 700007 / DSM 6899 / JCM 31910 / BCRC 17059 / LMG 24140 / F1).